Here is a 238-residue protein sequence, read N- to C-terminus: MGRKWANIVAKKTAKDGATSKVYAKFGVEIYAAAKQGEPDPESNSALKFVIERAKQAQVPKHVIDKAIDKAKGGGDETFVQGRYEGFGPNGSMVIAETLTSNVNRTIANIRTIFNKKGGNIGAAGAVSYMFDNTGVIVFKGTDPDHIFEILLDAEVDVRDVTEEEGNIVIYTEATDLHKGIAALKAAGISEFSTTELEMIAQSEVELSPEDLEIFEGLVDALEDDDDVQKVYHNVANL.

This sequence belongs to the TACO1 family. YeeN subfamily.

Its subcellular location is the cytoplasm. This Salmonella typhimurium (strain LT2 / SGSC1412 / ATCC 700720) protein is Probable transcriptional regulatory protein YeeN.